Consider the following 398-residue polypeptide: Ras-related GTP-binding protein C (398 aa).

Residues 1-56 (MSLQYGAEETPLAGSYGAADSFPKDFGYGVEEEEEEAAAGGGGGAGAGGGCGPGGA) are disordered. N-acetylserine is present on Ser2. Residues Ser2 and Ser15 each carry the phosphoserine modification. Over residues 39–55 (AGGGGGAGAGGGCGPGG) the composition is skewed to gly residues. The GDP site is built by Arg70, Ser71, Gly72, Lys73, Ser74, and Ser75. Lys73 contacts GTP. GTP-binding residues include Thr89 and Thr95. Position 95 is a phosphothreonine (Thr95). Residues His177, Lys178, Asp180, and Ile219 each contribute to the GDP site. Asp180 is a GTP binding site.

Belongs to the GTR/RAG GTP-binding protein family. In terms of assembly, forms a heterodimer with RRAGA, in a sequence-independent manner, and RRAGB. Heterodimerization stabilizes proteins of the heterodimer. The GDP-bound form of RRAGC (in complex with the GTP-bound form of RRAGA or RRAGB), interacts with RPTOR, thereby promoting recruitment of mTORC1 to the lysosomes. Component of the lysosomal folliculin complex (LFC), composed of FLCN, FNIP1 (or FNIP2), RagA/RRAGA or RagB/RRAGB GDP-bound, RagC/RRAGC or RagD/RRAGD GTP-bound, and Ragulator. Interacts with NOL8. Interacts with SH3BP4; the interaction with this negative regulator is most probably direct, preferentially occurs with the inactive GDP-bound form of RRAGB, is negatively regulated by amino acids and prevents interaction with RPTOR. The Rag heterodimer interacts with SLC38A9; the probable amino acid sensor. Interacts with SESN1, SESN2 and SESN3. Interacts with PIP4P1. The GDP-bound form interacts with TFEB. The GDP-bound form interacts with TFE3. As to expression, expressed most abundantly in kidney. Moderately expressed in brain, ovary, and testis, and detected at lower levels in heart, liver, and muscle. Not detected in lung, spleen, and small intestine. Widely expressed in tumor cells, with expression being specifically up-regulated in highly metastatic cells.

It localises to the cytoplasm. The protein localises to the nucleus. The protein resides in the lysosome membrane. It carries out the reaction GTP + H2O = GDP + phosphate + H(+). Its activity is regulated as follows. The activation of RagC/RRAGC is mediated by a GTPase activating protein (GAP). In high-amino acid conditions, activated by GTPase activating protein FLCN that stimulates RRAGC GTPase activity to turn it into its active GDP-bound form. In response to amino acid depletion, the GATOR1 complex inactivates RagC/RRAGC by securing the GTP-bound inactive form. In terms of biological role, guanine nucleotide-binding protein that plays a crucial role in the cellular response to amino acid availability through regulation of the mTORC1 signaling cascade. Forms heterodimeric Rag complexes with RagA/RRAGA or RagB/RRAGB and cycles between an inactive GTP-bound and an active GDP-bound form: RagC/RRAGC is in its active form when GDP-bound RagC/RRAGC forms a complex with GTP-bound RagA/RRAGA (or RagB/RRAGB) and in an inactive form when GTP-bound RagC/RRAGC heterodimerizes with GDP-bound RagA/RRAGA (or RagB/RRAGB). In its GDP-bound active form, promotes the recruitment of mTORC1 to the lysosomes and its subsequent activation by the GTPase RHEB. This is a crucial step in the activation of the MTOR signaling cascade by amino acids. Also plays a central role in the non-canonical mTORC1 complex, which acts independently of RHEB and specifically mediates phosphorylation of MiT/TFE factors TFEB and TFE3: GDP-bound RagC/RRAGC mediates recruitment of MiT/TFE factors TFEB and TFE3. The protein is Ras-related GTP-binding protein C of Mus musculus (Mouse).